Here is a 299-residue protein sequence, read N- to C-terminus: Prohibitin-2 (299 aa).

The residue at position 2 (alanine 2) is an N-acetylalanine. Residues 19 to 49 form a necessary for transcriptional repression region; the sequence is MGTALKLLLGAGAVAYGVRESVFTVEGGHRA. Tyrosine 128 is modified (phosphotyrosine). Lysine 147 carries the post-translational modification N6-acetyllysine. The segment at 150–174 is necessary for transcriptional repression; that stretch reads ASQLITQRAQVSLLIRRELTERAKD. Position 151 is a phosphoserine (serine 151). A coiled-coil region spans residues 190–238; that stretch reads SREYTAAVEAKQVAQQEAQRAQFLVEKAKQEQRQKIVQAEGEAEAAKML. Lysine 200, lysine 236, lysine 250, and lysine 262 each carry N6-acetyllysine.

The protein belongs to the prohibitin family. As to quaternary structure, the mitochondrial prohibitin complex consists of two subunits (PHB1 and PHB2), assembled into a membrane-associated ring-shaped supercomplex of approximately 1 mDa. Interacts with ESR1, HDAC1 and HDAC5. Interacts with ZNF703. Interacts with STOML2. Interacts with ARFGEF3. Interacts with SPHK2. Interacts with COX4I1; the interaction associates PHB2 with COX. Interacts with MAP1LC3B (membrane-bound form LC3-II); the interaction is direct and upon mitochondrial depolarization and proteasome-dependent outer membrane rupture. Interacts with IGFBP6 (via C-terminal domain). Interacts with CLPB. Interacts with CD86 (via cytoplasmic domain); the interactions increases after priming with CD40. Interacts with AFG3L2. Interacts with DNAJC19. Interacts with AKT2; this interaction may be important for myogenic differentiation. In terms of processing, phosphorylated. Tyrosine phosphorylation is indirectly stimulated by IGFBP6.

Its subcellular location is the mitochondrion inner membrane. It localises to the cytoplasm. The protein resides in the nucleus. The protein localises to the cell membrane. Functionally, protein with pleiotropic attributes mediated in a cell-compartment- and tissue-specific manner, which include the plasma membrane-associated cell signaling functions, mitochondrial chaperone, and transcriptional co-regulator of transcription factors and sex steroid hormones in the nucleus. In terms of biological role, in the mitochondria, together with PHB, forms large ring complexes (prohibitin complexes) in the inner mitochondrial membrane (IMM) and functions as a chaperone protein that stabilizes mitochondrial respiratory enzymes and maintains mitochondrial integrity in the IMM, which is required for mitochondrial morphogenesis, neuronal survival, and normal lifespan. The prohibitin complex, with DNAJC19, regulates cardiolipin remodeling and the protein turnover of OMA1 in a cardiolipin-binding manner. Also regulates cytochrome-c oxidase assembly (COX) and mitochondrial respiration. Binding to sphingoid 1-phosphate (SPP) modulates its regulator activity. Has a key role of mitophagy receptor involved in targeting mitochondria for autophagic degradation. Involved in mitochondrial-mediated antiviral innate immunity, activates RIG-I-mediated signal transduction and production of IFNB1 and pro-inflammatory cytokine IL6. Its function is as follows. In the nucleus, serves as transcriptional co-regulator. Acts as a mediator of transcriptional repression by nuclear hormone receptors via recruitment of histone deacetylases. Functions as an estrogen receptor (ER)-selective coregulator that potentiates the inhibitory activities of antiestrogens and represses the activity of estrogens. Competes with NCOA1 for modulation of ER transcriptional activity. In the plasma membrane, is involved in IGFBP6-induced cell migration. Cooperates with CD86 to mediate CD86-signaling in B lymphocytes that regulates the level of IgG1 produced through the activation of distal signaling intermediates. Upon CD40 engagement, required to activate NF-kappa-B signaling pathway via phospholipase C and protein kinase C activation. This chain is Prohibitin-2 (PHB2), found in Pongo abelii (Sumatran orangutan).